We begin with the raw amino-acid sequence, 732 residues long: Prolyl 3-hydroxylase 3 (732 aa).

The N-terminal stretch at M1–P19 is a signal peptide. A compositionally biased stretch (pro residues) spans P15 to P25. A disordered region spans residues P15–P35. 4 TPR repeats span residues P39–L72, R152–H185, Y214–H247, and L312–D345. N-linked (GlcNAc...) asparagine glycosylation is found at N327 and N458. The Fe2OG dioxygenase domain maps to T557 to W671. Fe cation contacts are provided by H580, D582, and H652. The active site involves R662. Residues E674 to D703 adopt a coiled-coil conformation. Residues S676 to L687 are compositionally biased toward basic and acidic residues. The disordered stretch occupies residues S676–L732. Over residues Q688–D698 the composition is skewed to acidic residues. A compositionally biased stretch (basic residues) spans K722–L732. Residues R729 to L732 carry the Prevents secretion from ER motif.

This sequence belongs to the leprecan family. Identified in a complex with PLOD1 and P3H4. Requires Fe cation as cofactor. It depends on L-ascorbate as a cofactor. In terms of tissue distribution, detected in kidney (at protein level).

It localises to the endoplasmic reticulum. It carries out the reaction L-prolyl-[collagen] + 2-oxoglutarate + O2 = trans-3-hydroxy-L-prolyl-[collagen] + succinate + CO2. In terms of biological role, part of a complex composed of PLOD1, P3H3 and P3H4 that catalyzes hydroxylation of lysine residues in collagen alpha chains and is required for normal assembly and cross-linkling of collagen fibrils. Required for normal hydroxylation of lysine residues in type I collagen chains in skin, bone, tendon, aorta and cornea. Required for normal skin stability via its role in hydroxylation of lysine residues in collagen alpha chains and in collagen fibril assembly. Apparently not required for normal prolyl 3-hydroxylation on collagen chains, possibly because it functions redundantly with other prolyl 3-hydroxylases. In Mus musculus (Mouse), this protein is Prolyl 3-hydroxylase 3.